Consider the following 352-residue polypeptide: Protein-glutamate methylesterase/protein-glutamine glutaminase 2 (352 aa).

Residues 6–124 (KVLIVEDSLV…NAGYDTMAAK (119 aa)) form the Response regulatory domain. The residue at position 57 (Asp-57) is a 4-aspartylphosphate. Residues 162-343 (PGTYSMVGIV…LPLPAIAARL (182 aa)) form the CheB-type methylesterase domain. Residues Ser-173, His-200, and Asp-292 contribute to the active site.

The protein belongs to the CheB family. In terms of processing, phosphorylated by CheA. Phosphorylation of the N-terminal regulatory domain activates the methylesterase activity.

It is found in the cytoplasm. The enzyme catalyses [protein]-L-glutamate 5-O-methyl ester + H2O = L-glutamyl-[protein] + methanol + H(+). The catalysed reaction is L-glutaminyl-[protein] + H2O = L-glutamyl-[protein] + NH4(+). In terms of biological role, involved in chemotaxis. Part of a chemotaxis signal transduction system that modulates chemotaxis in response to various stimuli. Catalyzes the demethylation of specific methylglutamate residues introduced into the chemoreceptors (methyl-accepting chemotaxis proteins or MCP) by CheR. Also mediates the irreversible deamidation of specific glutamine residues to glutamic acid. This is Protein-glutamate methylesterase/protein-glutamine glutaminase 2 from Paramagnetospirillum magneticum (strain ATCC 700264 / AMB-1) (Magnetospirillum magneticum).